A 350-amino-acid polypeptide reads, in one-letter code: MKVVNHATKYERLKHFLNALNEPTYRYKQITEAIFKHRIGAFNKMTTLPKALRESLINEFGPSILTVEPVLETTSQQVTKVLLKVAGNNQVEAVRMHYEAGWESFCISSQCGCGLGCTFCSTGAIGLKQNLSADEMTDQLLYFYLKGHSLDSVSFMGMGEALANVRIFDALNVLVDRQLFALSPRRITVSTVGIIPNIQRMTSSFPQMNLTFSLHSPFHDQRSELMPINNKYPLDQVMNVLDQHIHETGRKVYIAYVMLRGVNDSEKHAEALVKRILNNRYPHLYHVNLIRYNPTVGTPENYGQTIEEKLQTFYRVVKSARIPVTIRSQFGREIDAACGQLYGQYQAKKR.

The active-site Proton acceptor is the Glu-92. Residues 99 to 333 enclose the Radical SAM core domain; it reads EAGWESFCIS…VTIRSQFGRE (235 aa). A disulfide bond links Cys-106 and Cys-338. [4Fe-4S] cluster contacts are provided by Cys-113, Cys-117, and Cys-120. Residues 159–160, Ser-190, 213–215, and Asn-293 contribute to the S-adenosyl-L-methionine site; these read GE and SLH. The S-methylcysteine intermediate role is filled by Cys-338.

This sequence belongs to the radical SAM superfamily. RlmN family. Cfr subfamily. [4Fe-4S] cluster is required as a cofactor.

The protein resides in the cytoplasm. It carries out the reaction adenosine(2503) in 23S rRNA + 2 reduced [2Fe-2S]-[ferredoxin] + 2 S-adenosyl-L-methionine = 8-methyladenosine(2503) in 23S rRNA + 5'-deoxyadenosine + L-methionine + 2 oxidized [2Fe-2S]-[ferredoxin] + S-adenosyl-L-homocysteine. Functionally, specifically methylates position 8 of adenine 2503 in 23S rRNA. Confers resistance to some classes of antibiotics. This Shouchella clausii (strain KSM-K16) (Alkalihalobacillus clausii) protein is Ribosomal RNA large subunit methyltransferase Cfr.